The following is a 326-amino-acid chain: uncharacterized protein (326 aa).

Residues Val-15 to Glu-76 form the S4 RNA-binding domain. Residue Asp-147 is part of the active site.

It belongs to the pseudouridine synthase RluA family.

It carries out the reaction a uridine in RNA = a pseudouridine in RNA. This is an uncharacterized protein from Mycoplasma pneumoniae (strain ATCC 29342 / M129 / Subtype 1) (Mycoplasmoides pneumoniae).